We begin with the raw amino-acid sequence, 414 residues long: Serine/threonine transporter SstT (414 aa).

8 consecutive transmembrane segments (helical) span residues 16-36, 46-66, 84-104, 143-163, 180-200, 219-239, 300-320, and 332-352; these read GSLV…AWIS, LGTL…LMLV, ILFL…VFSF, ALLN…GFAL, AVTF…FGLV, LVVL…LLVF, MAGA…TLGV, and VVAS…LLLI.

It belongs to the dicarboxylate/amino acid:cation symporter (DAACS) (TC 2.A.23) family.

It is found in the cell inner membrane. It catalyses the reaction L-serine(in) + Na(+)(in) = L-serine(out) + Na(+)(out). It carries out the reaction L-threonine(in) + Na(+)(in) = L-threonine(out) + Na(+)(out). Involved in the import of serine and threonine into the cell, with the concomitant import of sodium (symport system). The chain is Serine/threonine transporter SstT from Salmonella dublin (strain CT_02021853).